Consider the following 589-residue polypeptide: Aspartate--tRNA(Asp/Asn) ligase (589 aa).

Glu175 is a binding site for L-aspartate. Residues 199-202 (QQLK) form an aspartate region. Residue Arg221 participates in L-aspartate binding. ATP-binding positions include 221 to 223 (RDE) and Gln230. His451 contributes to the L-aspartate binding site. Glu485 contacts ATP. An L-aspartate-binding site is contributed by Arg492. 537–540 (GIDR) contacts ATP.

The protein belongs to the class-II aminoacyl-tRNA synthetase family. Type 1 subfamily. Homodimer.

The protein resides in the cytoplasm. It catalyses the reaction tRNA(Asx) + L-aspartate + ATP = L-aspartyl-tRNA(Asx) + AMP + diphosphate. Its function is as follows. Aspartyl-tRNA synthetase with relaxed tRNA specificity since it is able to aspartylate not only its cognate tRNA(Asp) but also tRNA(Asn). Reaction proceeds in two steps: L-aspartate is first activated by ATP to form Asp-AMP and then transferred to the acceptor end of tRNA(Asp/Asn). The chain is Aspartate--tRNA(Asp/Asn) ligase from Roseiflexus sp. (strain RS-1).